The following is a 784-amino-acid chain: LPS-assembly protein LptD (784 aa).

Positions 1–24 are cleaved as a signal peptide; the sequence is MKKRIPTLLATMIATALYSQQGLA. 2 disulfides stabilise this stretch: cysteine 31/cysteine 724 and cysteine 173/cysteine 725.

This sequence belongs to the LptD family. Component of the lipopolysaccharide transport and assembly complex. Interacts with LptE and LptA. Post-translationally, contains two intramolecular disulfide bonds.

The protein resides in the cell outer membrane. Functionally, together with LptE, is involved in the assembly of lipopolysaccharide (LPS) at the surface of the outer membrane. The polypeptide is LPS-assembly protein LptD (Shigella flexneri serotype 5b (strain 8401)).